A 64-amino-acid polypeptide reads, in one-letter code: Large ribosomal subunit protein bL33c (64 aa).

The protein belongs to the bacterial ribosomal protein bL33 family.

Its subcellular location is the plastid. It is found in the cyanelle. The sequence is that of Large ribosomal subunit protein bL33c (rpl33) from Cyanophora paradoxa.